Reading from the N-terminus, the 626-residue chain is Janus kinase and microtubule-interacting protein 1 (626 aa).

The mediates association with microtubules stretch occupies residues 1–365 (MSKKGRSKGE…KIKNLTRENV (365 aa)). 2 coiled-coil regions span residues 19–254 (VQMA…REAE) and 284–413 (ERDV…DDLS). A mediates interaction with TYK2 and GABBR1 region spans residues 365–626 (VEMKEKLSAQ…ILFEPKLKFM (262 aa)). At serine 382 the chain carries Phosphoserine. Residues 452–461 (ETLSETSCNT) are compositionally biased toward polar residues. The segment at 452–480 (ETLSETSCNTDRTDRAPATPEEDLDDTTT) is disordered. Threonine 470 bears the Phosphothreonine mark. Positions 490 to 604 (QLTREYQALQ…EFRVLELEVR (115 aa)) form a coiled coil.

It belongs to the JAKMIP family. As to quaternary structure, homodimer. Forms a complex with GABBR1 and KIF5B/kinesin-1. Interacts with JAK1 and TYK2. Phosphorylated.

It is found in the cytoplasm. The protein localises to the cytoskeleton. Its subcellular location is the membrane. Functionally, associates with microtubules and may play a role in the microtubule-dependent transport of the GABA-B receptor. May play a role in JAK1 signaling and regulate microtubule cytoskeleton rearrangements. In Bos taurus (Bovine), this protein is Janus kinase and microtubule-interacting protein 1 (JAKMIP1).